Reading from the N-terminus, the 362-residue chain is uncharacterized protein (362 aa).

A helical transmembrane segment spans residues 13-33 (VLILSVGLNMLFLLLFYSAIF). The region spanning 314 to 357 (EEYVVQDGDSLWLIAKRFGIPMDKIIQKNGLNHHRLFPGKVLKL) is the LysM domain.

This sequence belongs to the chlamydial CPn_0593/CT_474/TC_0759 family.

The protein resides in the membrane. This is an uncharacterized protein from Chlamydia pneumoniae (Chlamydophila pneumoniae).